The primary structure comprises 333 residues: Protoheme IX farnesyltransferase (333 aa).

7 helical membrane-spanning segments follow: residues 64–84, 110–130, 133–153, 161–181, 189–209, 246–266, and 287–307; these read LICTLGGGALAAAAAGALNCL, TVFLAAVSCTLAASMLLVSGV, LAAGLTLLGLFSYVILYTVIL, IVFGGVAGAIPPLVGASAATG, WLFGLVMLWTPAHFWALAILL, IMGVFALPEGGLLYGIMLLPF, and AKSLFRWSILYMFGICLLLLI.

This sequence belongs to the UbiA prenyltransferase family. Protoheme IX farnesyltransferase subfamily.

It is found in the cell inner membrane. It carries out the reaction heme b + (2E,6E)-farnesyl diphosphate + H2O = Fe(II)-heme o + diphosphate. It participates in porphyrin-containing compound metabolism; heme O biosynthesis; heme O from protoheme: step 1/1. Converts heme B (protoheme IX) to heme O by substitution of the vinyl group on carbon 2 of heme B porphyrin ring with a hydroxyethyl farnesyl side group. The protein is Protoheme IX farnesyltransferase of Prochlorococcus marinus (strain AS9601).